Here is a 328-residue protein sequence, read N- to C-terminus: Coiled-coil domain-containing protein 54 (328 aa).

Positions 122–151 (TTKDILSMKEDIKALKKKVTELEKQNSYSR) form a coiled coil. Position 182 is a phosphothreonine (threonine 182). The span at 186-197 (TDREMSSAEPEK) shows a compositional bias: basic and acidic residues. The interval 186-205 (TDREMSSAEPEKVPSYPKST) is disordered.

The sequence is that of Coiled-coil domain-containing protein 54 (CCDC54) from Macaca fascicularis (Crab-eating macaque).